Consider the following 254-residue polypeptide: Cell division protein ZapD (254 aa).

It belongs to the ZapD family. As to quaternary structure, interacts with FtsZ.

It is found in the cytoplasm. Functionally, cell division factor that enhances FtsZ-ring assembly. Directly interacts with FtsZ and promotes bundling of FtsZ protofilaments, with a reduction in FtsZ GTPase activity. The polypeptide is Cell division protein ZapD (Idiomarina loihiensis (strain ATCC BAA-735 / DSM 15497 / L2-TR)).